The primary structure comprises 266 residues: Signal peptidase I (266 aa).

The Cytoplasmic segment spans residues 1-20; sequence MQTDNTKSNTNKTAKQEWGS. The chain crosses the membrane as a helical span at residues 21–41; that stretch reads FAFVICIALLIRILIMEPFNV. Residues 42 to 266 are Extracellular-facing; it reads PTGSMKATIL…IFRNLYNTDA (225 aa). Catalysis depends on residues serine 45 and lysine 108.

Belongs to the peptidase S26 family.

The protein resides in the cell membrane. The catalysed reaction is Cleavage of hydrophobic, N-terminal signal or leader sequences from secreted and periplasmic proteins.. This Rickettsia conorii (strain ATCC VR-613 / Malish 7) protein is Signal peptidase I (lepB).